The chain runs to 314 residues: Ribosomal protein L11 methyltransferase (314 aa).

4 residues coordinate S-adenosyl-L-methionine: T161, G182, D204, and N248.

The protein belongs to the methyltransferase superfamily. PrmA family.

The protein resides in the cytoplasm. The catalysed reaction is L-lysyl-[protein] + 3 S-adenosyl-L-methionine = N(6),N(6),N(6)-trimethyl-L-lysyl-[protein] + 3 S-adenosyl-L-homocysteine + 3 H(+). Methylates ribosomal protein L11. The sequence is that of Ribosomal protein L11 methyltransferase from Listeria monocytogenes serotype 4b (strain CLIP80459).